Consider the following 224-residue polypeptide: Zinc finger protein 22 (224 aa).

The tract at residues 1-34 (MRLAKPKAGISRSSSQGKAYENKRKTGRQRQKWG) is disordered. N6-acetyllysine is present on residues Lys18 and Lys23. At Ser49 the chain carries Phosphoserine. 5 consecutive C2H2-type zinc fingers follow at residues 55–77 (YKCTECEKSFSQSSTLFQHQKIH), 83–105 (HKCADCGKSFFQSSNLIQHRRIH), 111–133 (YKCDECGESFKQSSNLIQHQRIH), 139–161 (YQCDECGRCFSQSSHLIQHQRTH), and 167–189 (YQCSECGKCFSQSSHLRQHMKVH).

This sequence belongs to the krueppel C2H2-type zinc-finger protein family. As to expression, in the embryo, expressed in developing craniofacial structures including dental epithelium of maxillary molar tooth organs, tongue epithelium and muscle, and craniofacial bone osteoblasts. In the adult, expressed in mesoderm-derived tissues such as skeletal muscle, heart, kidney and liver. Intermediate expression in spleen, thymus and brain. Low levels in endoderm-derived tissues such as intestine and colon.

Its subcellular location is the nucleus. Its function is as follows. Binds DNA through the consensus sequence 5'-CAATG-3'. May be involved in transcriptional regulation and may play a role in tooth formation. The chain is Zinc finger protein 22 (ZNF22) from Homo sapiens (Human).